The primary structure comprises 498 residues: Argininosuccinate lyase 1 (498 aa).

It belongs to the lyase 1 family. Argininosuccinate lyase subfamily.

It localises to the cytoplasm. It catalyses the reaction 2-(N(omega)-L-arginino)succinate = fumarate + L-arginine. The protein operates within amino-acid biosynthesis; L-arginine biosynthesis; L-arginine from L-ornithine and carbamoyl phosphate: step 3/3. In Shouchella clausii (strain KSM-K16) (Alkalihalobacillus clausii), this protein is Argininosuccinate lyase 1.